A 313-amino-acid chain; its full sequence is Glutathione S-transferase omega-like 2 (313 aa).

The Nucleophile role is filled by C49. The region spanning 161 to 289 (PSSLRTKIDE…TDFKHIKCHY (129 aa)) is the GST C-terminal domain.

It belongs to the GST superfamily. Omega family.

The protein resides in the cytoplasm. It is found in the nucleus. Its subcellular location is the golgi apparatus. It carries out the reaction RX + glutathione = an S-substituted glutathione + a halide anion + H(+). The catalysed reaction is L-dehydroascorbate + 2 glutathione = glutathione disulfide + L-ascorbate. In terms of biological role, active as '1-Cys' thiol transferase against beta-hydroxyethyl disulfide (HED), as dehydroascorbate reductase and as dimethylarsinic acid reductase, while not active against the standard GST substrate 1-chloro-2,4-dinitrobenzene (CDNB). May be involved in cell wall organization and biogenesis. This chain is Glutathione S-transferase omega-like 2 (gto2), found in Schizosaccharomyces pombe (strain 972 / ATCC 24843) (Fission yeast).